Here is a 94-residue protein sequence, read N- to C-terminus: Co-chaperonin GroES (94 aa).

The protein belongs to the GroES chaperonin family. Heptamer of 7 subunits arranged in a ring. Interacts with the chaperonin GroEL.

The protein resides in the cytoplasm. In terms of biological role, together with the chaperonin GroEL, plays an essential role in assisting protein folding. The GroEL-GroES system forms a nano-cage that allows encapsulation of the non-native substrate proteins and provides a physical environment optimized to promote and accelerate protein folding. GroES binds to the apical surface of the GroEL ring, thereby capping the opening of the GroEL channel. This is Co-chaperonin GroES from Clostridium perfringens (strain ATCC 13124 / DSM 756 / JCM 1290 / NCIMB 6125 / NCTC 8237 / Type A).